The primary structure comprises 284 residues: Large ribosomal subunit protein uL2 (284 aa).

A disordered region spans residues 232–284; the sequence is RGTAMNPVDHPHGGGEGRHNGYIPRTPWGKVTKGLKTRDKRKSNKWIVKDRRK. Positions 240–250 are enriched in basic and acidic residues; the sequence is DHPHGGGEGRH. Positions 264–284 are enriched in basic residues; sequence KGLKTRDKRKSNKWIVKDRRK.

This sequence belongs to the universal ribosomal protein uL2 family. As to quaternary structure, part of the 50S ribosomal subunit. Forms a bridge to the 30S subunit in the 70S ribosome.

In terms of biological role, one of the primary rRNA binding proteins. Required for association of the 30S and 50S subunits to form the 70S ribosome, for tRNA binding and peptide bond formation. It has been suggested to have peptidyltransferase activity; this is somewhat controversial. Makes several contacts with the 16S rRNA in the 70S ribosome. In Chlamydia abortus (strain DSM 27085 / S26/3) (Chlamydophila abortus), this protein is Large ribosomal subunit protein uL2.